The primary structure comprises 69 residues: Large ribosomal subunit protein bL28 (69 aa).

This sequence belongs to the bacterial ribosomal protein bL28 family.

The protein is Large ribosomal subunit protein bL28 of Desulfovibrio desulfuricans (strain ATCC 27774 / DSM 6949 / MB).